We begin with the raw amino-acid sequence, 182 residues long: RFKKIRRLGALPGLTSKRPGSGSDPKNKSRSGKRSQYRIRLEEKQKLRFHYGLTERQLLKYVHIAGKAKGSTGLVLLQLLEMRLDNILFRLGMASTIPGARQLVNHRHILVNGRIVDIPSYRCKPRDIITTKDKQRSKALIQNYIASSPHEELPNHLTIDPIQYKGLVNQIIDSKWIGLKIN.

The disordered stretch occupies residues 8–36 (LGALPGLTSKRPGSGSDPKNKSRSGKRSQ). The S4 RNA-binding domain maps to 82–143 (MRLDNILFRL…KQRSKALIQN (62 aa)).

It belongs to the universal ribosomal protein uS4 family. As to quaternary structure, part of the 30S ribosomal subunit. Contacts protein S5. The interaction surface between S4 and S5 is involved in control of translational fidelity.

The protein resides in the plastid. Its subcellular location is the chloroplast. Functionally, one of the primary rRNA binding proteins, it binds directly to 16S rRNA where it nucleates assembly of the body of the 30S subunit. In terms of biological role, with S5 and S12 plays an important role in translational accuracy. In Dietes robinsoniana (Lord Howe wedding lily), this protein is Small ribosomal subunit protein uS4c (rps4).